The chain runs to 457 residues: Siroheme synthase (457 aa).

Residues 1–204 (MDHLPIFCQL…NDQKAITETT (204 aa)) form a precorrin-2 dehydrogenase /sirohydrochlorin ferrochelatase region. Residues 22-23 (DV) and 43-44 (LA) each bind NAD(+). Serine 128 is subject to Phosphoserine. Residues 216–457 (GEVVLVGAGP…RDKLNWFSNH (242 aa)) form a uroporphyrinogen-III C-methyltransferase region. Proline 225 is a binding site for S-adenosyl-L-methionine. The active-site Proton acceptor is the aspartate 248. The active-site Proton donor is the lysine 270. S-adenosyl-L-methionine-binding positions include 301–303 (GGD), isoleucine 306, 331–332 (TA), methionine 382, and glycine 411.

The protein in the N-terminal section; belongs to the precorrin-2 dehydrogenase / sirohydrochlorin ferrochelatase family. It in the C-terminal section; belongs to the precorrin methyltransferase family.

The catalysed reaction is uroporphyrinogen III + 2 S-adenosyl-L-methionine = precorrin-2 + 2 S-adenosyl-L-homocysteine + H(+). It catalyses the reaction precorrin-2 + NAD(+) = sirohydrochlorin + NADH + 2 H(+). It carries out the reaction siroheme + 2 H(+) = sirohydrochlorin + Fe(2+). It functions in the pathway cofactor biosynthesis; adenosylcobalamin biosynthesis; precorrin-2 from uroporphyrinogen III: step 1/1. The protein operates within cofactor biosynthesis; adenosylcobalamin biosynthesis; sirohydrochlorin from precorrin-2: step 1/1. It participates in porphyrin-containing compound metabolism; siroheme biosynthesis; precorrin-2 from uroporphyrinogen III: step 1/1. Its pathway is porphyrin-containing compound metabolism; siroheme biosynthesis; siroheme from sirohydrochlorin: step 1/1. It functions in the pathway porphyrin-containing compound metabolism; siroheme biosynthesis; sirohydrochlorin from precorrin-2: step 1/1. Its function is as follows. Multifunctional enzyme that catalyzes the SAM-dependent methylations of uroporphyrinogen III at position C-2 and C-7 to form precorrin-2 via precorrin-1. Then it catalyzes the NAD-dependent ring dehydrogenation of precorrin-2 to yield sirohydrochlorin. Finally, it catalyzes the ferrochelation of sirohydrochlorin to yield siroheme. This chain is Siroheme synthase, found in Escherichia coli O6:H1 (strain CFT073 / ATCC 700928 / UPEC).